An 88-amino-acid chain; its full sequence is Acylphosphatase (88 aa).

The 86-residue stretch at 3 to 88 folds into the Acylphosphatase-like domain; the sequence is AARFIFTGVV…IPTTEAFVTG (86 aa). Catalysis depends on residues arginine 18 and asparagine 36.

This sequence belongs to the acylphosphatase family.

The catalysed reaction is an acyl phosphate + H2O = a carboxylate + phosphate + H(+). This is Acylphosphatase (acyP) from Xanthomonas campestris pv. campestris (strain 8004).